We begin with the raw amino-acid sequence, 178 residues long: Large ribosomal subunit protein uL6 (178 aa).

It belongs to the universal ribosomal protein uL6 family. In terms of assembly, part of the 50S ribosomal subunit.

Functionally, this protein binds to the 23S rRNA, and is important in its secondary structure. It is located near the subunit interface in the base of the L7/L12 stalk, and near the tRNA binding site of the peptidyltransferase center. The sequence is that of Large ribosomal subunit protein uL6 from Thermoplasma acidophilum (strain ATCC 25905 / DSM 1728 / JCM 9062 / NBRC 15155 / AMRC-C165).